Here is a 230-residue protein sequence, read N- to C-terminus: MQKVSRRHKENFERTKNIVYSNIDEAIAVLKETATTKFVESVELHANLNIDPKYADQQLRTTVTLPNGIGKQVVIAVLTNEENFEEAKSSGGDIVGNDELIAQITQGQINFDLLIATPNMMPKLAKLGRMLGPKGLMPSPKSGTVTSTLQSTLTEFKKGKFEYKADKTGIVHVNFGKSNFTNEQLVENLKALYQSIEQNRPSGVKGKYFKSVSICTTMGPSVKLDLEIFA.

It belongs to the universal ribosomal protein uL1 family. In terms of assembly, part of the 50S ribosomal subunit.

It localises to the plastid. The protein resides in the chloroplast. In terms of biological role, binds directly to 23S rRNA. Might be involved in E site tRNA release (Potential). In Phaeodactylum tricornutum (strain CCAP 1055/1), this protein is Large ribosomal subunit protein uL1c (rpl1).